The primary structure comprises 176 residues: NAD(P)H-quinone oxidoreductase subunit I, chloroplastic (176 aa).

4Fe-4S ferredoxin-type domains are found at residues 55-84 (GRIH…VDWE) and 95-124 (LNYS…MTEE). Residues C64, C67, C70, C74, C104, C107, C110, and C114 each contribute to the [4Fe-4S] cluster site.

This sequence belongs to the complex I 23 kDa subunit family. As to quaternary structure, NDH is composed of at least 16 different subunits, 5 of which are encoded in the nucleus. [4Fe-4S] cluster is required as a cofactor.

The protein resides in the plastid. It localises to the chloroplast thylakoid membrane. The enzyme catalyses a plastoquinone + NADH + (n+1) H(+)(in) = a plastoquinol + NAD(+) + n H(+)(out). It catalyses the reaction a plastoquinone + NADPH + (n+1) H(+)(in) = a plastoquinol + NADP(+) + n H(+)(out). Functionally, NDH shuttles electrons from NAD(P)H:plastoquinone, via FMN and iron-sulfur (Fe-S) centers, to quinones in the photosynthetic chain and possibly in a chloroplast respiratory chain. The immediate electron acceptor for the enzyme in this species is believed to be plastoquinone. Couples the redox reaction to proton translocation, and thus conserves the redox energy in a proton gradient. The sequence is that of NAD(P)H-quinone oxidoreductase subunit I, chloroplastic from Populus alba (White poplar).